We begin with the raw amino-acid sequence, 399 residues long: Glutathione S-transferase LANCL1 (399 aa).

Position 2 is an N-acetylalanine (alanine 2). Residue lysine 142 is modified to N6-acetyllysine. Position 276 (cysteine 276) interacts with Zn(2+). Position 317 (lysine 317) interacts with glutathione. Zn(2+) is bound by residues cysteine 322 and histidine 323. 364–367 is a glutathione binding site; that stretch reads RTPD.

Belongs to the LanC-like protein family. As to quaternary structure, interacts with the C-terminal of STOM. Interacts with the EPS8 SH3 domain. Interaction with EPS8 is inhibited by glutathione binding. In terms of tissue distribution, strongly expressed in the brain, testis and skeletal muscle. Expressed in the neurons of the cerebellum, the germinal cells of the seminiferous tubules in testis, in liver hepoatocytes and in cardiac myocytes.

It localises to the cytoplasm. Its subcellular location is the cell membrane. The catalysed reaction is RX + glutathione = an S-substituted glutathione + a halide anion + H(+). It catalyses the reaction 1-chloro-2,4-dinitrobenzene + glutathione = 2,4-dinitrophenyl-S-glutathione + chloride + H(+). Functions as a glutathione transferase. Catalyzes conjugation of the glutathione (GSH) to artificial substrates 1-chloro-2,4-dinitrobenzene (CDNB) and p-nitrophenyl acetate. Mitigates neuronal oxidative stress during normal postnatal development and in response to oxidative stresses probably through GSH antioxidant defense mechanism. May play a role in EPS8 signaling. Binds glutathione. In Rattus norvegicus (Rat), this protein is Glutathione S-transferase LANCL1.